Consider the following 449-residue polypeptide: UDP-N-acetylmuramoylalanine--D-glutamate ligase (449 aa).

119 to 125 is a binding site for ATP; it reads GTNGKTT.

Belongs to the MurCDEF family.

Its subcellular location is the cytoplasm. It catalyses the reaction UDP-N-acetyl-alpha-D-muramoyl-L-alanine + D-glutamate + ATP = UDP-N-acetyl-alpha-D-muramoyl-L-alanyl-D-glutamate + ADP + phosphate + H(+). The protein operates within cell wall biogenesis; peptidoglycan biosynthesis. Its function is as follows. Cell wall formation. Catalyzes the addition of glutamate to the nucleotide precursor UDP-N-acetylmuramoyl-L-alanine (UMA). The polypeptide is UDP-N-acetylmuramoylalanine--D-glutamate ligase (Lactococcus lactis subsp. cremoris (strain MG1363)).